Reading from the N-terminus, the 223-residue chain is Cytidylate kinase (223 aa).

10–18 (GPASSGKST) is an ATP binding site.

It belongs to the cytidylate kinase family. Type 1 subfamily.

It is found in the cytoplasm. It catalyses the reaction CMP + ATP = CDP + ADP. It carries out the reaction dCMP + ATP = dCDP + ADP. The polypeptide is Cytidylate kinase (Streptococcus pneumoniae (strain 70585)).